The primary structure comprises 977 residues: Alanine--tRNA ligase (977 aa).

The tract at residues 512 to 535 (SQVDSKLQSSTPAGTGSYDSKQVS) is disordered. Zn(2+)-binding residues include histidine 618, histidine 622, cysteine 720, and histidine 724.

It belongs to the class-II aminoacyl-tRNA synthetase family. Zn(2+) is required as a cofactor.

The protein localises to the cytoplasm. It carries out the reaction tRNA(Ala) + L-alanine + ATP = L-alanyl-tRNA(Ala) + AMP + diphosphate. Its function is as follows. Catalyzes the attachment of alanine to tRNA(Ala) in a two-step reaction: alanine is first activated by ATP to form Ala-AMP and then transferred to the acceptor end of tRNA(Ala). Also edits incorrectly charged Ser-tRNA(Ala) and Gly-tRNA(Ala) via its editing domain. This Leptospira interrogans serogroup Icterohaemorrhagiae serovar Lai (strain 56601) protein is Alanine--tRNA ligase.